An 886-amino-acid chain; its full sequence is Peptidyl-lysine N-acetyltransferase Pat (886 aa).

The region spanning 487–523 is the ATP-grasp domain; sequence QPILHAYGLHTLPTWIASDSAEAVHIAEQIGYPVALK. 513–524 contributes to the ATP binding site; it reads AEQIGYPVALKL. Positions 726–881 constitute an N-acetyltransferase domain; it reads CLFRPILPED…GIVGLTLNLA (156 aa).

In the N-terminal section; belongs to the acetate CoA ligase alpha subunit family. It in the central section; belongs to the acetate CoA ligase beta subunit family. Monomer in the absence of acetyl-CoA. Oligomerizes to a tetrameric form in the presence of acetyl-CoA.

The catalysed reaction is L-lysyl-[protein] + acetyl-CoA = N(6)-acetyl-L-lysyl-[protein] + CoA + H(+). Exhibits positive cooperativity. It may be the result of acetyl-CoA binding to two distinct sites, or the result of subunit interactions. In terms of biological role, acetylates and inactivates the acetyl-CoA synthase (Acs). Can also acetylate other central metabolic enzymes in response to environmental changes. This is Peptidyl-lysine N-acetyltransferase Pat (pat) from Salmonella typhimurium (strain LT2 / SGSC1412 / ATCC 700720).